Consider the following 126-residue polypeptide: Holo-[acyl-carrier-protein] synthase (126 aa).

Mg(2+) is bound by residues aspartate 9 and glutamate 57.

It belongs to the P-Pant transferase superfamily. AcpS family. Mg(2+) serves as cofactor.

It is found in the cytoplasm. It catalyses the reaction apo-[ACP] + CoA = holo-[ACP] + adenosine 3',5'-bisphosphate + H(+). Its function is as follows. Transfers the 4'-phosphopantetheine moiety from coenzyme A to a Ser of acyl-carrier-protein. This is Holo-[acyl-carrier-protein] synthase from Pseudoalteromonas atlantica (strain T6c / ATCC BAA-1087).